Consider the following 369-residue polypeptide: Chaperone protein DnaJ (369 aa).

One can recognise a J domain in the interval 3–67 (DHYEVLGVER…QQRQQYDRGG (65 aa)). The CR-type zinc finger occupies 123–205 (GAHRDLEVDT…CQGQGRVRAR (83 aa)). Zn(2+)-binding residues include cysteine 136, cysteine 139, cysteine 153, cysteine 156, cysteine 179, cysteine 182, cysteine 193, and cysteine 196. CXXCXGXG motif repeat units follow at residues 136 to 143 (CETCDGSC), 153 to 160 (CDICHGTG), 179 to 186 (CGSCRGYG), and 193 to 200 (CVTCQGQG).

The protein belongs to the DnaJ family. As to quaternary structure, homodimer. Zn(2+) serves as cofactor.

Its subcellular location is the cytoplasm. Its function is as follows. Participates actively in the response to hyperosmotic and heat shock by preventing the aggregation of stress-denatured proteins and by disaggregating proteins, also in an autonomous, DnaK-independent fashion. Unfolded proteins bind initially to DnaJ; upon interaction with the DnaJ-bound protein, DnaK hydrolyzes its bound ATP, resulting in the formation of a stable complex. GrpE releases ADP from DnaK; ATP binding to DnaK triggers the release of the substrate protein, thus completing the reaction cycle. Several rounds of ATP-dependent interactions between DnaJ, DnaK and GrpE are required for fully efficient folding. Also involved, together with DnaK and GrpE, in the DNA replication of plasmids through activation of initiation proteins. The sequence is that of Chaperone protein DnaJ from Leifsonia xyli subsp. xyli (strain CTCB07).